We begin with the raw amino-acid sequence, 315 residues long: Olfactory receptor 5A1 (315 aa).

At 1-28 the chain is on the extracellular side; it reads MSITKAWNSSSVTMFILLGFTDHPELQA. Asn8 carries N-linked (GlcNAc...) asparagine glycosylation. A helical membrane pass occupies residues 29 to 52; the sequence is LLFVTFLGIYLTTLAWNLALIFLI. The Cytoplasmic segment spans residues 53 to 60; that stretch reads RGDTHLHT. The chain crosses the membrane as a helical span at residues 61 to 82; that stretch reads PMYFFLSNLSFIDICYSSAVAP. Over 83–103 the chain is Extracellular; the sequence is NMLTDFFWEQKTISFVGCAAQ. The cysteines at positions 100 and 192 are disulfide-linked. The chain crosses the membrane as a helical span at residues 104-123; the sequence is FFFFVGMGLSECLLLTAMAY. The Cytoplasmic segment spans residues 124–142; sequence DRYAAISSPLLYPTIMTQG. A helical transmembrane segment spans residues 143 to 161; the sequence is LCTRMVVGAYVGGFLSSLI. The Extracellular segment spans residues 162–198; it reads QASSIFRLHFCGPNIINHFFCDLPPVLALSCSDTFLS. Residues 199 to 222 traverse the membrane as a helical segment; that stretch reads QVVNFLVVVTVGGTSFLQLLISYG. At 223–239 the chain is on the cytoplasmic side; that stretch reads YIVSAVLKIPSAEGRWK. A helical transmembrane segment spans residues 240 to 262; it reads ACNTCASHLMVVTLLFGTALFVY. Over 263–275 the chain is Extracellular; it reads LRPSSSYLLGRDK. The helical transmembrane segment at 276 to 295 threads the bilayer; the sequence is VVSVFYSLVIPMLNPLIYSL. Over 296-315 the chain is Cytoplasmic; it reads RNKEIKDALWKVLERKKVFS.

This sequence belongs to the G-protein coupled receptor 1 family.

It is found in the cell membrane. In terms of biological role, odorant receptor. This chain is Olfactory receptor 5A1 (OR5A1), found in Homo sapiens (Human).